A 654-amino-acid polypeptide reads, in one-letter code: Beta-mannosyltransferase 2 (654 aa).

Residues 1 to 37 lie on the Cytoplasmic side of the membrane; sequence MLAWLRHRIRSYNTSTYSSILPSASFGKVYKIGTKLN. The chain crosses the membrane as a helical span at residues 38-58; it reads FTLLALCLLLACSVFFNYFYL. Residues 59 to 654 lie on the Extracellular side of the membrane; that stretch reads ADNNGLDIDT…ANGNGKGSSS (596 aa).

It belongs to the BMT family.

The protein localises to the membrane. In terms of biological role, beta-mannosyltransferase involved in cell wall biosynthesis. Required for the addition of beta-mannose to the acid-labile fraction of cell wall phosphopeptidomannan. This chain is Beta-mannosyltransferase 2 (RHD1), found in Candida albicans (strain SC5314 / ATCC MYA-2876) (Yeast).